The following is a 412-amino-acid chain: Multifunctional CCA protein (412 aa).

G8 and R11 together coordinate ATP. Residues G8 and R11 each coordinate CTP. 2 residues coordinate Mg(2+): D21 and D23. Residues R91, R137, and R140 each coordinate ATP. CTP-binding residues include R91, R137, and R140. An HD domain is found at 228-329; sequence TGIHTLMTLS…VKLFDSIDAW (102 aa).

The protein belongs to the tRNA nucleotidyltransferase/poly(A) polymerase family. Bacterial CCA-adding enzyme type 1 subfamily. As to quaternary structure, monomer. Can also form homodimers and oligomers. Mg(2+) is required as a cofactor. The cofactor is Ni(2+).

The enzyme catalyses a tRNA precursor + 2 CTP + ATP = a tRNA with a 3' CCA end + 3 diphosphate. The catalysed reaction is a tRNA with a 3' CCA end + 2 CTP + ATP = a tRNA with a 3' CCACCA end + 3 diphosphate. In terms of biological role, catalyzes the addition and repair of the essential 3'-terminal CCA sequence in tRNAs without using a nucleic acid template. Adds these three nucleotides in the order of C, C, and A to the tRNA nucleotide-73, using CTP and ATP as substrates and producing inorganic pyrophosphate. tRNA 3'-terminal CCA addition is required both for tRNA processing and repair. Also involved in tRNA surveillance by mediating tandem CCA addition to generate a CCACCA at the 3' terminus of unstable tRNAs. While stable tRNAs receive only 3'-terminal CCA, unstable tRNAs are marked with CCACCA and rapidly degraded. The sequence is that of Multifunctional CCA protein from Shigella dysenteriae serotype 1 (strain Sd197).